The chain runs to 509 residues: Tyrosine-protein kinase Lck (509 aa).

A lipid anchor (N-myristoyl glycine) is attached at glycine 2. The segment at 2-72 (GCGCSSHPED…DNLVIALHSY (71 aa)) is interactions with CD4 and CD8. 2 S-palmitoyl cysteine lipidation sites follow: cysteine 3 and cysteine 5. The region spanning 61–121 (LQDNLVIALH…PFNFVAKANS (61 aa)) is the SH3 domain. Lysine 99 is covalently cross-linked (Glycyl lysine isopeptide (Lys-Gly) (interchain with G-Cter in ubiquitin)). Residue serine 102 is modified to Phosphoserine. One can recognise an SH2 domain in the interval 127 to 224 (WFFKNLSRKD…GLCTRLSRPC (98 aa)). The interval 154–242 (RESESTAGSF…WWEDEWEVPR (89 aa)) is interaction with PTPRH. A Phosphothreonine modification is found at threonine 159. Serine 162 carries the phosphoserine modification. Tyrosine 192 is modified (phosphotyrosine). The residue at position 194 (serine 194) is a Phosphoserine. A Protein kinase domain is found at 245-498 (LKLVERLGAG…YLRSVLEDFF (254 aa)). ATP is bound by residues 251–259 (LGAGQFGEV) and lysine 273. A Glycyl lysine isopeptide (Lys-Gly) (interchain with G-Cter in ubiquitin) cross-link involves residue lysine 276. Aspartate 364 serves as the catalytic Proton acceptor. Phosphotyrosine; by autocatalysis is present on tyrosine 394. Tyrosine 505 is modified (phosphotyrosine; by CSK).

The protein belongs to the protein kinase superfamily. Tyr protein kinase family. SRC subfamily. As to quaternary structure, binds to the cytoplasmic domain of cell surface receptors, such as AXL, CD2, CD4, CD5, CD8, CD44, CD45 and CD122. Also binds to effector molecules, such as PI4K, VAV1, RASA1, FYB1 and to other protein kinases including CDK1, RAF1, ZAP70 and SYK. Binds to phosphatidylinositol 3'-kinase (PI3K) from T-lymphocytes through its SH3 domain and to the tyrosine phosphorylated form of KHDRBS1/p70 through its SH2 domain. Interacts with SQSTM1. Interacts with phosphorylated LIME1. LIME1. Interacts with CBLB and PTPRH. Interacts with RUNX3. Forms a signaling complex with EPHA1, PTK2B and PI3-KINASE; upon activation by EFNA1 which may regulate T-lymphocytes migration. Associates with ZAP70 and RHOH; these interactions allow LCK-mediated RHOH and CD3 subunit phosphorylation in the presence of functional ZAP70. Interacts with CEACAM1 (via cytoplasmic domain); mediates CEACAM1 phosphorylation resulting in PTPN6 recruitment that dephosphorylates TCR stimulation-induced CD247 and ZAP70. Interacts with CD160. Interacts with CD48. In terms of processing, autophosphorylated on Tyr-394, increasing enzymatic activity, this site is dephosphorylated by PTN22. Phosphorylated on Tyr-505 by CSK, decreasing activity. Dephosphorylated by PTPRC/CD45. Dephosphorylation at Tyr-394 by PTPN2 negatively regulates T-cells differentiation. Dephosphorylation at Tyr-394 by DUSP22 negatively regulates T-cell receptor signaling. Post-translationally, myristoylation is required prior to palmitoylation. Palmitoylation regulates association with the plasma membrane and could be mediated by ZDHHC2. In terms of processing, 'Lys-63'-linked ubiquitinated at Lys-99 and Lys-276 by UBR2; this modification is required for autophosphorylation at Tyr-394.

It localises to the cell membrane. It is found in the cytoplasm. The protein localises to the cytosol. The catalysed reaction is L-tyrosyl-[protein] + ATP = O-phospho-L-tyrosyl-[protein] + ADP + H(+). The relative activities of the inhibitory tyrosine-protein kinase CSK and the activating tyrosine-protein phosphatase PTPRC/CD45 determine the level of LCK activity. These interactions allow rapid and efficient activation of LCK in response to TCR stimulation. Non-receptor tyrosine-protein kinase that plays an essential role in the selection and maturation of developing T-cells in the thymus and in the function of mature T-cells. Plays a key role in T-cell antigen receptor (TCR)-linked signal transduction pathways. Constitutively associated with the cytoplasmic portions of the CD4 and CD8 surface receptors. Association of the TCR with a peptide antigen-bound MHC complex facilitates the interaction of CD4 and CD8 with MHC class II and class I molecules, respectively, thereby recruiting the associated LCK protein to the vicinity of the TCR/CD3 complex. LCK then phosphorylates tyrosine residues within the immunoreceptor tyrosine-based activation motifs (ITAM) of the cytoplasmic tails of the TCR-gamma chains and CD3 subunits, initiating the TCR/CD3 signaling pathway. Once stimulated, the TCR recruits the tyrosine kinase ZAP70, that becomes phosphorylated and activated by LCK. Following this, a large number of signaling molecules are recruited, ultimately leading to lymphokine production. LCK also contributes to signaling by other receptor molecules. Associates directly with the cytoplasmic tail of CD2, which leads to hyperphosphorylation and activation of LCK. Also plays a role in the IL2 receptor-linked signaling pathway that controls the T-cell proliferative response. Binding of IL2 to its receptor results in increased activity of LCK. Is expressed at all stages of thymocyte development and is required for the regulation of maturation events that are governed by both pre-TCR and mature alpha beta TCR. Phosphorylates other substrates including RUNX3, PTK2B/PYK2, the microtubule-associated protein MAPT, RHOH or TYROBP. Interacts with UNC119; this interaction plays a crucial role in activation of LCK. This chain is Tyrosine-protein kinase Lck (LCK), found in Aotus nancymaae (Ma's night monkey).